The chain runs to 124 residues: SPbeta prophage-derived uncharacterized protein YoqO (124 aa).

The next 2 helical transmembrane spans lie at 54 to 74 (LVVI…LLSF) and 88 to 108 (VIFI…ISIM).

It localises to the cell membrane. The chain is SPbeta prophage-derived uncharacterized protein YoqO (yoqO) from Bacillus subtilis (strain 168).